A 354-amino-acid chain; its full sequence is Transcription activator of gluconeogenesis ERT1-1 (354 aa).

Residues 1–29 (MSFYPILRGPAKQESPPPPPAPKKRRKTA) form a disordered region. The zn(2)-C6 fungal-type DNA-binding region spans 32–60 (CLHCQKAHLTCDEGRPCARCIKKNMGDQC). Disordered regions lie at residues 71-111 (LVGL…FGSS) and 128-169 (DTSS…QGSP). Residues 81 to 98 (QATQQKQQQQQQQQQAVQ) are compositionally biased toward low complexity. The span at 159 to 169 (SQTAGTPQGSP) shows a compositional bias: polar residues.

Belongs to the ERT1/acuK family.

The protein resides in the nucleus. In terms of biological role, transcription factor which regulates nonfermentable carbon utilization. Activator of gluconeogenetic genes. The sequence is that of Transcription activator of gluconeogenesis ERT1-1 (ERT1-1) from Yarrowia lipolytica (strain CLIB 122 / E 150) (Yeast).